Here is a 337-residue protein sequence, read N- to C-terminus: Anthranilate phosphoribosyltransferase (337 aa).

Residues glycine 80, 83–84, threonine 88, 90–93, 108–116, and serine 120 contribute to the 5-phospho-alpha-D-ribose 1-diphosphate site; these read GD, NIST, and KHGNRAVSS. Glycine 80 is an anthranilate binding site. Serine 92 provides a ligand contact to Mg(2+). Asparagine 111 provides a ligand contact to anthranilate. Arginine 166 contacts anthranilate. Positions 224 and 225 each coordinate Mg(2+).

This sequence belongs to the anthranilate phosphoribosyltransferase family. Homodimer. The cofactor is Mg(2+).

It carries out the reaction N-(5-phospho-beta-D-ribosyl)anthranilate + diphosphate = 5-phospho-alpha-D-ribose 1-diphosphate + anthranilate. It participates in amino-acid biosynthesis; L-tryptophan biosynthesis; L-tryptophan from chorismate: step 2/5. Functionally, catalyzes the transfer of the phosphoribosyl group of 5-phosphorylribose-1-pyrophosphate (PRPP) to anthranilate to yield N-(5'-phosphoribosyl)-anthranilate (PRA). This is Anthranilate phosphoribosyltransferase from Anaeromyxobacter sp. (strain K).